A 776-amino-acid chain; its full sequence is Mitochondrial intermediate peptidase (776 aa).

The N-terminal 28 residues, 1-28 (MRRFSTLSRRLQRVVPASSASTANTSPS), are a transit peptide targeting the mitochondrion. His561 contributes to the Zn(2+) binding site. Glu562 is a catalytic residue. His565 and His568 together coordinate Zn(2+).

This sequence belongs to the peptidase M3 family. Zn(2+) is required as a cofactor.

It is found in the mitochondrion matrix. The catalysed reaction is Release of an N-terminal octapeptide as second stage of processing of some proteins imported into the mitochondrion.. Functionally, cleaves proteins, imported into the mitochondrion, to their mature size. While most mitochondrial precursor proteins are processed to the mature form in one step by mitochondrial processing peptidase (MPP), the sequential cleavage by MIP of an octapeptide after initial processing by MPP is a required step for a subgroup of nuclear-encoded precursor proteins destined for the matrix or the inner membrane. This Yarrowia lipolytica (strain CLIB 122 / E 150) (Yeast) protein is Mitochondrial intermediate peptidase (OCT1).